Here is a 402-residue protein sequence, read N- to C-terminus: Indole-3-glycerol phosphate synthase, chloroplastic (402 aa).

A chloroplast-targeting transit peptide spans 1-65; sequence MEGLVPVQRL…SDLKESLAVS (65 aa).

This sequence belongs to the TrpC family. In terms of tissue distribution, expressed in leaves.

The protein resides in the plastid. It localises to the chloroplast. It catalyses the reaction 1-(2-carboxyphenylamino)-1-deoxy-D-ribulose 5-phosphate + H(+) = (1S,2R)-1-C-(indol-3-yl)glycerol 3-phosphate + CO2 + H2O. Its pathway is amino-acid biosynthesis; L-tryptophan biosynthesis; L-tryptophan from chorismate: step 4/5. Indole-3-glycerol phosphate synthase required for tryptophan biosynthesis. This Arabidopsis thaliana (Mouse-ear cress) protein is Indole-3-glycerol phosphate synthase, chloroplastic.